Reading from the N-terminus, the 352-residue chain is Cuticle collagen dpy-17 (352 aa).

The signal sequence occupies residues 1 to 29 (MSVFAGYAACTLGAVSMLLCVSLVPQVYQ). Residues 61-64 (RVRR) are furin-like endopeptidase recognition region. 2 disordered regions span residues 73-143 (GGYG…GPGD) and 156-352 (GPAG…GYRN). Gly residues predominate over residues 87 to 97 (GPHGGFPGGPQ). 4 triple-helical region regions span residues 156 to 182 (GPAG…DGED), 202 to 264 (GPQG…DVEH), 267 to 290 (GLPG…QGDR), and 294 to 329 (GIAG…PGQD). A Collagen-like domain is found at 202–259 (GPQGPPGSQGKPGARGMRGARGQAAMPGRDGSPGMPGSLGPIGPPGAAGEEGPTGEPG). Low complexity predominate over residues 207–259 (PGSQGKPGARGMRGARGQAAMPGRDGSPGMPGSLGPIGPPGAAGEEGPTGEPG). The segment covering 337–352 (QRNTNAAVSGNQGYRN) has biased composition (polar residues).

Belongs to the cuticular collagen family. As to quaternary structure, collagen polypeptide chains are complexed within the cuticle by disulfide bonds and other types of covalent cross-links.

The protein localises to the secreted. It localises to the extracellular space. Its function is as follows. Secreted collagen that forms part of the nematode cuticle, which functions as an exoskeleton and a barrier to protect the worm from its environment. Secretion and subsequent incorporation into the cuticle is likely mediated by bli-4, which probably cleaves at the N-terminal consensus furin cleavage site. The chain is Cuticle collagen dpy-17 from Caenorhabditis elegans.